We begin with the raw amino-acid sequence, 218 residues long: Deoxyribose-phosphate aldolase (218 aa).

The active-site Proton donor/acceptor is Asp-89. Lys-152 acts as the Schiff-base intermediate with acetaldehyde in catalysis. Catalysis depends on Lys-182, which acts as the Proton donor/acceptor.

It belongs to the DeoC/FbaB aldolase family. DeoC type 1 subfamily.

It localises to the cytoplasm. The enzyme catalyses 2-deoxy-D-ribose 5-phosphate = D-glyceraldehyde 3-phosphate + acetaldehyde. It functions in the pathway carbohydrate degradation; 2-deoxy-D-ribose 1-phosphate degradation; D-glyceraldehyde 3-phosphate and acetaldehyde from 2-deoxy-alpha-D-ribose 1-phosphate: step 2/2. Functionally, catalyzes a reversible aldol reaction between acetaldehyde and D-glyceraldehyde 3-phosphate to generate 2-deoxy-D-ribose 5-phosphate. In Corynebacterium diphtheriae (strain ATCC 700971 / NCTC 13129 / Biotype gravis), this protein is Deoxyribose-phosphate aldolase.